Here is a 437-residue protein sequence, read N- to C-terminus: Probable carboxypeptidase HCBG_00059 (437 aa).

An N-terminal signal peptide occupies residues 1–20 (MKLSNLAALLSASTVAPVAA). Asn153 carries an N-linked (GlcNAc...) asparagine glycan. Residue Asp163 participates in Zn(2+) binding. Glu195 (proton acceptor) is an active-site residue. Position 196 (Glu196) interacts with Zn(2+). Residue Asn346 is glycosylated (N-linked (GlcNAc...) asparagine).

It belongs to the peptidase M20A family. Requires Zn(2+) as cofactor.

The protein localises to the secreted. The polypeptide is Probable carboxypeptidase HCBG_00059 (Ajellomyces capsulatus (strain G186AR / H82 / ATCC MYA-2454 / RMSCC 2432) (Darling's disease fungus)).